Consider the following 448-residue polypeptide: Beta-glucosidase B (448 aa).

Catalysis depends on Glu-167, which acts as the Proton donor. The active-site Nucleophile is the Glu-356.

Belongs to the glycosyl hydrolase 1 family.

It catalyses the reaction Hydrolysis of terminal, non-reducing beta-D-glucosyl residues with release of beta-D-glucose.. This chain is Beta-glucosidase B (bglB), found in Paenibacillus polymyxa (Bacillus polymyxa).